Here is a 244-residue protein sequence, read N- to C-terminus: Thiol S-methyltransferase TMT1B (244 aa).

The N-terminal stretch at methionine 1–alanine 23 is a signal peptide.

This sequence belongs to the methyltransferase superfamily. In terms of tissue distribution, highly expressed in liver and kidney. No expression in testis, heart, lung, brain, spleen or cultured fibroblasts.

The protein resides in the endoplasmic reticulum membrane. Its subcellular location is the lipid droplet. It is found in the microsome. The protein localises to the cytoplasm. It localises to the cytosol. The enzyme catalyses a thiol + S-adenosyl-L-methionine = a methyl thioether + S-adenosyl-L-homocysteine + H(+). Its function is as follows. Thiol S-methyltransferase that catalyzes the transfer of a methyl group from S-adenosyl-L-methionine to alkyl and phenolic thiol-containing acceptor substrates. Together with TMT1B accounts for most of S-thiol methylation activity in the endoplasmic reticulum of hepatocytes. Selectively methylates S-centered nucleophiles from metabolites such as hydrogen sulfide and dithiothreitol. This chain is Thiol S-methyltransferase TMT1B (Tmt1b), found in Rattus norvegicus (Rat).